Reading from the N-terminus, the 114-residue chain is T cell receptor beta variable 9 (114 aa).

Positions 1–21 are cleaved as a signal peptide; the sequence is MGFRLLCCVAFCLLGAGPVDS. Residues 22–114 enclose the Ig-like domain; it reads GVTQTPKHLI…SALYFCASSV (93 aa). C42 and C110 form a disulfide bridge. N-linked (GlcNAc...) asparagine glycosylation occurs at N96.

As to quaternary structure, alpha-beta TR is a heterodimer composed of an alpha and beta chain; disulfide-linked. The alpha-beta TR is associated with the transmembrane signaling CD3 coreceptor proteins to form the TR-CD3 (TcR or TCR). The assembly of alpha-beta TR heterodimers with CD3 occurs in the endoplasmic reticulum where a single alpha-beta TR heterodimer associates with one CD3D-CD3E heterodimer, one CD3G-CD3E heterodimer and one CD247 homodimer forming a stable octameric structure. CD3D-CD3E and CD3G-CD3E heterodimers preferentially associate with TR alpha and TR beta chains, respectively. The association of the CD247 homodimer is the last step of TcR assembly in the endoplasmic reticulum and is required for transport to the cell surface.

It localises to the cell membrane. V region of the variable domain of T cell receptor (TR) beta chain that participates in the antigen recognition. Alpha-beta T cell receptors are antigen specific receptors which are essential to the immune response and are present on the cell surface of T lymphocytes. Recognize peptide-major histocompatibility (MH) (pMH) complexes that are displayed by antigen presenting cells (APC), a prerequisite for efficient T cell adaptive immunity against pathogens. Binding of alpha-beta TR to pMH complex initiates TR-CD3 clustering on the cell surface and intracellular activation of LCK that phosphorylates the ITAM motifs of CD3G, CD3D, CD3E and CD247 enabling the recruitment of ZAP70. In turn ZAP70 phosphorylates LAT, which recruits numerous signaling molecules to form the LAT signalosome. The LAT signalosome propagates signal branching to three major signaling pathways, the calcium, the mitogen-activated protein kinase (MAPK) kinase and the nuclear factor NF-kappa-B (NF-kB) pathways, leading to the mobilization of transcription factors that are critical for gene expression and essential for T cell growth and differentiation. The T cell repertoire is generated in the thymus, by V-(D)-J rearrangement. This repertoire is then shaped by intrathymic selection events to generate a peripheral T cell pool of self-MH restricted, non-autoaggressive T cells. Post-thymic interaction of alpha-beta TR with the pMH complexes shapes TR structural and functional avidity. The sequence is that of T cell receptor beta variable 9 from Homo sapiens (Human).